The following is a 715-amino-acid chain: Interferon-induced GTP-binding protein Mx2 (715 aa).

Positions 115 to 387 (DLALPAIAVI…LIMHIQKSLP (273 aa)) constitute a Dynamin-type G domain. The interval 125–132 (GDQSSGKS) is G1 motif. A GTP-binding site is contributed by 125 to 132 (GDQSSGKS). Positions 150-152 (VTR) are G2 motif. Positions 225 to 228 (DLPG) are G3 motif. GTP is bound by residues 225–229 (DLPGI) and 294–297 (TKPD). The segment at 294-297 (TKPD) is G4 motif. Residues 326 to 329 (KCRG) form a G5 motif region. Residues 623–714 (FTEIGIHLNA…ALCQFSSKEI (92 aa)) form the GED domain.

This sequence belongs to the TRAFAC class dynamin-like GTPase superfamily. Dynamin/Fzo/YdjA family.

The protein resides in the cytoplasm. The protein localises to the nucleus. It localises to the nuclear pore complex. Its function is as follows. Interferon-induced dynamin-like GTPase with potent antiviral activity against human immunodeficiency virus type 1 (HIV-1). Acts by targeting the viral capsid and affects the nuclear uptake and/or stability of the HIV-1 replication complex and the subsequent chromosomal integration of the proviral DNA. Exhibits antiviral activity also against simian immunodeficiency virus (SIV-mnd). May play a role in regulating nucleocytoplasmic transport and cell-cycle progression. This Homo sapiens (Human) protein is Interferon-induced GTP-binding protein Mx2 (MX2).